Reading from the N-terminus, the 343-residue chain is Ribosomal RNA small subunit methyltransferase C (343 aa).

This sequence belongs to the methyltransferase superfamily. RsmC family. In terms of assembly, monomer.

The protein resides in the cytoplasm. It carries out the reaction guanosine(1207) in 16S rRNA + S-adenosyl-L-methionine = N(2)-methylguanosine(1207) in 16S rRNA + S-adenosyl-L-homocysteine + H(+). Its function is as follows. Specifically methylates the guanine in position 1207 of 16S rRNA in the 30S particle. This chain is Ribosomal RNA small subunit methyltransferase C, found in Escherichia coli O8 (strain IAI1).